Here is a 360-residue protein sequence, read N- to C-terminus: Epoxide hydrolase 3 (360 aa).

Residues 22–42 (AFMWSLVFSVALVAAAVYGCI) form a helical membrane-spanning segment. The active-site Nucleophile is Asp173. The active-site Proton donor is the Tyr281. His337 serves as the catalytic Proton acceptor.

The protein belongs to the AB hydrolase superfamily. Epoxide hydrolase family.

It is found in the microsome membrane. It carries out the reaction an epoxide + H2O = an ethanediol. It catalyses the reaction 9,10-epoxyoctadecanoate + H2O = 9,10-dihydroxyoctadecanoate. The enzyme catalyses 9,10-epoxy-(12Z)-octadecenoate + H2O = 9,10-dihydroxy-(12Z)-octadecenoate. The catalysed reaction is 8,9-epoxy-(5Z,11Z,14Z)-eicosatrienoate + H2O = 8,9-dihydroxy-(5Z,11Z,14Z)-eicosatrienoate. It carries out the reaction 11,12-epoxy-(5Z,8Z,14Z)-eicosatrienoate + H2O = 11,12-dihydroxy-(5Z,8Z,14Z)-eicosatrienoate. It catalyses the reaction 14,15-epoxy-(5Z,8Z,11Z)-eicosatrienoate + H2O = 14,15-dihydroxy-(5Z,8Z,11Z)-eicosatrienoate. Its activity is regulated as follows. Inhibited by 1-(1-acetylpiperidin-4-yl)-3-(4-(trifl uoromethoxy)phenyl)urea (TPAU), 1-cyclohexyl-3-dodecylurea (CDU), 12-(3-adamantan-1-yl-ureido)-dodecanoic acid (AUDA), 1-((3S, 5S, 7S)-adamantan-1-yl)-3-(5-(2-(2-ethoxyethoxy) ethoxy)pentyl)urea (AEPU) and to a lesser extent by 8-(3-((3S, 5S, 7S)-adamantan-1-yl)ureido) octanoic acid (AUOA). In terms of biological role, catalyzes the hydrolysis of epoxide-containing fatty acids. Active in vitro against epoxyeicosatrienoic acids (EETs) including 8,9-EET, 9,10-EET, 11,12-EET and 14,15-EET and leukotoxin. The chain is Epoxide hydrolase 3 (EPHX3) from Homo sapiens (Human).